The primary structure comprises 598 residues: Elongation factor 4 2 (598 aa).

Positions 2–184 (KHIRNFCIIA…GIVKNLPAPK (183 aa)) constitute a tr-type G domain. GTP contacts are provided by residues 14–19 (DHGKST) and 131–134 (NKID).

Belongs to the TRAFAC class translation factor GTPase superfamily. Classic translation factor GTPase family. LepA subfamily.

Its subcellular location is the cell inner membrane. The enzyme catalyses GTP + H2O = GDP + phosphate + H(+). Required for accurate and efficient protein synthesis under certain stress conditions. May act as a fidelity factor of the translation reaction, by catalyzing a one-codon backward translocation of tRNAs on improperly translocated ribosomes. Back-translocation proceeds from a post-translocation (POST) complex to a pre-translocation (PRE) complex, thus giving elongation factor G a second chance to translocate the tRNAs correctly. Binds to ribosomes in a GTP-dependent manner. The chain is Elongation factor 4 2 from Rhodopirellula baltica (strain DSM 10527 / NCIMB 13988 / SH1).